A 340-amino-acid polypeptide reads, in one-letter code: L-threonine 3-dehydrogenase (340 aa).

Cysteine 38 contacts Zn(2+). Catalysis depends on charge relay system residues threonine 40 and histidine 43. Residues histidine 63, glutamate 64, cysteine 93, cysteine 96, cysteine 99, and cysteine 107 each coordinate Zn(2+). Residues isoleucine 175, aspartate 195, arginine 200, 261–263 (LGI), and 285–286 (IY) each bind NAD(+).

The protein belongs to the zinc-containing alcohol dehydrogenase family. In terms of assembly, homotetramer. Requires Zn(2+) as cofactor.

Its subcellular location is the cytoplasm. It catalyses the reaction L-threonine + NAD(+) = (2S)-2-amino-3-oxobutanoate + NADH + H(+). It functions in the pathway amino-acid degradation; L-threonine degradation via oxydo-reductase pathway; glycine from L-threonine: step 1/2. Its function is as follows. Catalyzes the NAD(+)-dependent oxidation of L-threonine to 2-amino-3-ketobutyrate. This is L-threonine 3-dehydrogenase from Xanthomonas axonopodis pv. citri (strain 306).